The chain runs to 489 residues: Glutamyl-tRNA(Gln) amidotransferase subunit A (489 aa).

Active-site charge relay system residues include K80 and S160. The active-site Acyl-ester intermediate is the S184.

This sequence belongs to the amidase family. GatA subfamily. In terms of assembly, heterotrimer of A, B and C subunits.

The enzyme catalyses L-glutamyl-tRNA(Gln) + L-glutamine + ATP + H2O = L-glutaminyl-tRNA(Gln) + L-glutamate + ADP + phosphate + H(+). Its function is as follows. Allows the formation of correctly charged Gln-tRNA(Gln) through the transamidation of misacylated Glu-tRNA(Gln) in organisms which lack glutaminyl-tRNA synthetase. The reaction takes place in the presence of glutamine and ATP through an activated gamma-phospho-Glu-tRNA(Gln). In Wolbachia sp. subsp. Brugia malayi (strain TRS), this protein is Glutamyl-tRNA(Gln) amidotransferase subunit A.